The following is a 409-amino-acid chain: 2-methylfumaryl-CoA isomerase (409 aa).

Residue Asp-165 is the Nucleophile of the active site.

Belongs to the CoA-transferase III family. Mesaconyl-CoA isomerase subfamily. In terms of assembly, homodimer.

It catalyses the reaction 2-methylfumaryl-CoA = 3-methylfumaryl-CoA. With respect to regulation, partially inhibited by hydroxylamine. Functionally, involved in the glyoxylate assimilation cycle used to regenerate acetyl-CoA and produce pyruvate as universal precursor for biosynthesis. This reaction involves an intramolecular CoA transferase that catalyzes the reversible transfer of the CoA moiety from the C1-carboxyl group of mesaconyl-CoA to the C4-carboxyl group. It does not require free mesaconate as CoA acceptor. The polypeptide is 2-methylfumaryl-CoA isomerase (mct) (Chloroflexus aurantiacus (strain ATCC 29366 / DSM 635 / J-10-fl)).